Reading from the N-terminus, the 156-residue chain is Small ribosomal subunit protein uS7 (156 aa).

It belongs to the universal ribosomal protein uS7 family. Part of the 30S ribosomal subunit. Contacts proteins S9 and S11.

Its function is as follows. One of the primary rRNA binding proteins, it binds directly to 16S rRNA where it nucleates assembly of the head domain of the 30S subunit. Is located at the subunit interface close to the decoding center, probably blocks exit of the E-site tRNA. This chain is Small ribosomal subunit protein uS7, found in Treponema pallidum (strain Nichols).